The chain runs to 793 residues: Phenylalanine--tRNA ligase beta subunit (793 aa).

The region spanning 39–148 is the tRNA-binding domain; that stretch reads AGQFTHVIVA…DEAPIGMDLR (110 aa). A B5 domain is found at 401–477; it reads PGTVSFLFDT…RLYGYDKLQA (77 aa). Mg(2+)-binding residues include D455, D461, E464, and E465. In terms of domain architecture, FDX-ACB spans 698–792; sequence SKYPQIRRDL…LENEFSILLR (95 aa).

It belongs to the phenylalanyl-tRNA synthetase beta subunit family. Type 1 subfamily. Tetramer of two alpha and two beta subunits. Requires Mg(2+) as cofactor.

The protein resides in the cytoplasm. The enzyme catalyses tRNA(Phe) + L-phenylalanine + ATP = L-phenylalanyl-tRNA(Phe) + AMP + diphosphate + H(+). The chain is Phenylalanine--tRNA ligase beta subunit from Legionella pneumophila (strain Paris).